The chain runs to 144 residues: Large ribosomal subunit protein uL15 (144 aa).

The tract at residues 1 to 44 is disordered; sequence MKLNELMPSEGSRTNRKRIGRGTSSGTGKTAGRGQKGQKARGKV. A compositionally biased stretch (gly residues) spans 23–35; that stretch reads TSSGTGKTAGRGQ.

Belongs to the universal ribosomal protein uL15 family. Part of the 50S ribosomal subunit.

In terms of biological role, binds to the 23S rRNA. The protein is Large ribosomal subunit protein uL15 of Pediococcus pentosaceus (strain ATCC 25745 / CCUG 21536 / LMG 10740 / 183-1w).